Consider the following 143-residue polypeptide: 3-dehydroquinate dehydratase (143 aa).

The active-site Proton acceptor is the Tyr22. Substrate contacts are provided by Asn73, His79, and Asp86. The Proton donor role is filled by His99. Substrate contacts are provided by residues 100-101 (LS) and Arg110.

Belongs to the type-II 3-dehydroquinase family. As to quaternary structure, homododecamer.

It carries out the reaction 3-dehydroquinate = 3-dehydroshikimate + H2O. Its pathway is metabolic intermediate biosynthesis; chorismate biosynthesis; chorismate from D-erythrose 4-phosphate and phosphoenolpyruvate: step 3/7. Catalyzes a trans-dehydration via an enolate intermediate. The sequence is that of 3-dehydroquinate dehydratase from Salinispora tropica (strain ATCC BAA-916 / DSM 44818 / JCM 13857 / NBRC 105044 / CNB-440).